We begin with the raw amino-acid sequence, 68 residues long: Ribosome modulation factor (68 aa).

The protein belongs to the ribosome modulation factor family.

Its subcellular location is the cytoplasm. Its function is as follows. During stationary phase, converts 70S ribosomes to an inactive dimeric form (100S ribosomes). This Alcanivorax borkumensis (strain ATCC 700651 / DSM 11573 / NCIMB 13689 / SK2) protein is Ribosome modulation factor.